Here is a 621-residue protein sequence, read N- to C-terminus: Phosphomethylpyrimidine synthase (621 aa).

Residues Met1–Pro23 show a composition bias toward low complexity. Residues Met1 to Tyr29 form a disordered region. Residues Asn215, Met244, Tyr273, His309, Ser329–Gly331, Asp370–Arg373, and Glu409 each bind substrate. His413 contributes to the Zn(2+) binding site. Tyr436 contacts substrate. Residue His477 coordinates Zn(2+). Positions 557, 560, and 565 each coordinate [4Fe-4S] cluster.

Belongs to the ThiC family. In terms of assembly, homodimer. [4Fe-4S] cluster serves as cofactor.

The catalysed reaction is 5-amino-1-(5-phospho-beta-D-ribosyl)imidazole + S-adenosyl-L-methionine = 4-amino-2-methyl-5-(phosphooxymethyl)pyrimidine + CO + 5'-deoxyadenosine + formate + L-methionine + 3 H(+). It participates in cofactor biosynthesis; thiamine diphosphate biosynthesis. Its function is as follows. Catalyzes the synthesis of the hydroxymethylpyrimidine phosphate (HMP-P) moiety of thiamine from aminoimidazole ribotide (AIR) in a radical S-adenosyl-L-methionine (SAM)-dependent reaction. The protein is Phosphomethylpyrimidine synthase of Rhodospirillum rubrum (strain ATCC 11170 / ATH 1.1.1 / DSM 467 / LMG 4362 / NCIMB 8255 / S1).